The sequence spans 391 residues: MNLLEQLRQMTVVVADTGDILAIQKFTPRDATTNPSLITAAAQMKEYQSIVDETLRQAKADLGSGATSREIVSLAVDRLAVAFGLKILQIIPGRVSTEVDARLSYDTAATVQKARELISQYEAAGVGRDRVLIKIAATWEGIRAAEILEKEGIHCNLTLLFGFHQAVACAEAGVTLISPFVGRILDWYKKKTGRAEYPGPEDPGVISVTKIYNYYKKFGYPTEVMGASFRNIGEIIELAGCDLLTISPALLQELQNTTGELKRKLDPAIAATLDIEKVAMDEATFRKMHAADEMASEKLEEGIKGFTKALETLEDLLRRHLARIEGEATLTHAAEELFHVYDLDGDGIITREEWLGTDAVFDALDANHDGKVTPEDMGAGLGVVLHLAQAK.

The Schiff-base intermediate with substrate role is filled by lysine 134. EF-hand domains follow at residues 329–364 (TLTHAAEELFHVYDLDGDGIITREEWLGTDAVFDAL) and 365–387 (DANHDGKVTPEDMGAGLGVVLHL). Ca(2+) contacts are provided by aspartate 342, aspartate 344, aspartate 346, glutamate 353, aspartate 365, asparagine 367, aspartate 369, lysine 371, and aspartate 376.

The protein belongs to the transaldolase family. Type 1 subfamily.

It localises to the cytoplasm. The catalysed reaction is D-sedoheptulose 7-phosphate + D-glyceraldehyde 3-phosphate = D-erythrose 4-phosphate + beta-D-fructose 6-phosphate. It participates in carbohydrate degradation; pentose phosphate pathway; D-glyceraldehyde 3-phosphate and beta-D-fructose 6-phosphate from D-ribose 5-phosphate and D-xylulose 5-phosphate (non-oxidative stage): step 2/3. In terms of biological role, transaldolase is important for the balance of metabolites in the pentose-phosphate pathway. This Thermosynechococcus vestitus (strain NIES-2133 / IAM M-273 / BP-1) protein is Transaldolase.